We begin with the raw amino-acid sequence, 1757 residues long: E3 ubiquitin-protein ligase UBR1 (1757 aa).

The segment at 1–24 is disordered; that stretch reads MADEEMDGAERMDVSPEPPLAPQR. Residue alanine 2 is modified to N-acetylalanine. The segment at 97 to 168 adopts a UBR-type zinc-finger fold; it reads QLCGKVFKSG…TGPFCVDHEP (72 aa). Zn(2+)-binding residues include cysteine 99, cysteine 112, cysteine 115, cysteine 124, cysteine 127, histidine 133, and histidine 136. Residue phenylalanine 148 participates in a peptide binding. Cysteine 149 lines the Zn(2+) pocket. Aspartate 150 is a binding site for a peptide. Zn(2+) is bound at residue cysteine 151. Aspartate 153 lines the a peptide pocket. Cysteine 163 and histidine 166 together coordinate Zn(2+). The segment at 842-868 is disordered; it reads QHSKAEHMQKKRRKQENKDEALPPPPP. The interval 1022–1057 is UBC2-binding region (U2BR); it reads RKRKAEAARLHRQKIMAQMSALQKNFIETHKLMYDN. Zn(2+) contacts are provided by cysteine 1101, cysteine 1104, cysteine 1162, histidine 1164, histidine 1167, and cysteine 1170. The RING-type; atypical zinc finger occupies 1101 to 1204; the sequence is CILCQEEQEV…SGEYLCPLCK (104 aa). Serine 1182 carries the post-translational modification Phosphoserine. Zn(2+) is bound by residues cysteine 1200, cysteine 1203, cysteine 1635, cysteine 1638, and cysteine 1661.

The protein belongs to the E3 ubiquitin-protein ligase UBR1-like family. As to quaternary structure, interacts with RECQL4. As to expression, present in skeletal muscle and liver (at protein level). Broadly expressed, with highest levels in skeletal muscle and heart. Expressed in acinar cells of the pancreas. In testes, expressed primarily in spermatogonia.

The protein resides in the cytoplasm. It localises to the cytosol. The enzyme catalyses S-ubiquitinyl-[E2 ubiquitin-conjugating enzyme]-L-cysteine + [acceptor protein]-L-lysine = [E2 ubiquitin-conjugating enzyme]-L-cysteine + N(6)-ubiquitinyl-[acceptor protein]-L-lysine.. The protein operates within protein modification; protein ubiquitination. Its function is as follows. E3 ubiquitin-protein ligase which is a component of the N-end rule pathway. Recognizes and binds proteins bearing specific N-terminal residues (N-degrons) that are destabilizing according to the N-end rule, leading to their ubiquitination and subsequent degradation. Recognizes both type-1 and type-2 N-degrons, containing positively charged amino acids (Arg, Lys and His) and bulky and hydrophobic amino acids, respectively. Does not ubiquitinate proteins that are acetylated at the N-terminus. In contrast, it strongly binds methylated N-degrons. Binds leucine and is a negative regulator of the leucine-mTOR signaling pathway, thereby controlling cell growth. This Mus musculus (Mouse) protein is E3 ubiquitin-protein ligase UBR1.